The following is a 790-amino-acid chain: Penicillin-binding protein 1A (790 aa).

The Cytoplasmic segment spans residues 1 to 6; sequence MYKSLL. Residues 7-27 traverse the membrane as a helical; Signal-anchor for type II membrane protein segment; the sequence is FCLKIFVFLILVGCGITAYII. Over 28-790 the chain is Periplasmic; sequence YHYSRDLPDY…SKEDQSQEIY (763 aa). Residues 49–220 are transglycosylase; it reads TRIYSRDGKL…SELNPERNYA (172 aa). Glu87 (proton donor; for transglycosylase activity) is an active-site residue. Residues 398-711 are transpeptidase; sequence DVIVVEAIKE…SNVVLPIFID (314 aa). Residue Ser457 is the Acyl-ester intermediate; for transpeptidase activity of the active site.

In the N-terminal section; belongs to the glycosyltransferase 51 family. The protein in the C-terminal section; belongs to the transpeptidase family.

It is found in the cell inner membrane. It catalyses the reaction [GlcNAc-(1-&gt;4)-Mur2Ac(oyl-L-Ala-gamma-D-Glu-L-Lys-D-Ala-D-Ala)](n)-di-trans,octa-cis-undecaprenyl diphosphate + beta-D-GlcNAc-(1-&gt;4)-Mur2Ac(oyl-L-Ala-gamma-D-Glu-L-Lys-D-Ala-D-Ala)-di-trans,octa-cis-undecaprenyl diphosphate = [GlcNAc-(1-&gt;4)-Mur2Ac(oyl-L-Ala-gamma-D-Glu-L-Lys-D-Ala-D-Ala)](n+1)-di-trans,octa-cis-undecaprenyl diphosphate + di-trans,octa-cis-undecaprenyl diphosphate + H(+). The catalysed reaction is Preferential cleavage: (Ac)2-L-Lys-D-Ala-|-D-Ala. Also transpeptidation of peptidyl-alanyl moieties that are N-acyl substituents of D-alanine.. Its pathway is cell wall biogenesis; peptidoglycan biosynthesis. Cell wall formation. Synthesis of cross-linked peptidoglycan from the lipid intermediates. The enzyme has a penicillin-insensitive transglycosylase N-terminal domain (formation of linear glycan strands) and a penicillin-sensitive transpeptidase C-terminal domain (cross-linking of the peptide subunits). This is Penicillin-binding protein 1A (mrcA) from Rickettsia conorii (strain ATCC VR-613 / Malish 7).